The primary structure comprises 283 residues: Tetrahydroxynaphthalene reductase (283 aa).

The tract at residues 1–21 (MPAVTQPRGESKYDAIPGPLG) is disordered. 39-63 (RGIGREMAMELGRRGCKVIVNYANS) serves as a coordination point for NADP(+). S164 serves as a coordination point for substrate. Y178 (proton acceptor) is an active-site residue.

This sequence belongs to the short-chain dehydrogenases/reductases (SDR) family. In terms of assembly, homotetramer.

It catalyses the reaction scytalone + NADP(+) = naphthalene-1,3,6,8-tetrol + NADPH + H(+). Its pathway is pigment biosynthesis; melanin biosynthesis. Its function is as follows. Catalyzes the NADPH-dependent reduction of 1,3,6,8-tetrahydroxynaphthalene (T4HN) into (+)-scytalone and 1,3,8-trihydroxynaphthalene into (-)-vermelone. This enzyme is the biochemical target of several commercially important fungicides which are used to prevent blast disease in rice plants. The polypeptide is Tetrahydroxynaphthalene reductase (Pyricularia oryzae (strain 70-15 / ATCC MYA-4617 / FGSC 8958) (Rice blast fungus)).